Reading from the N-terminus, the 1960-residue chain is Zinc finger protein 638 (1960 aa).

Residues 1–137 (MSRPRFNPRG…SPKVQSRYTK (137 aa)) are disordered. Positions 19-31 (APNPPGMRPPGPF) are enriched in pro residues. An asymmetric dimethylarginine mark is found at arginine 47, arginine 49, and arginine 54. The segment covering 60 to 75 (SYQNMGPQRMNVQVTQ) has biased composition (polar residues). A compositionally biased stretch (basic and acidic residues) spans 76–89 (HRTDPRLTKEKLDF). Positions 117 to 137 (KQSSVTQVTEQSPKVQSRYTK) are enriched in polar residues. Phosphoserine is present on residues serine 128 and serine 288. Lysine 291 participates in a covalent cross-link: Glycyl lysine isopeptide (Lys-Gly) (interchain with G-Cter in SUMO2). Phosphoserine occurs at positions 298, 367, 381, and 418. The disordered stretch occupies residues 352-373 (KSVISSADAHGGPTESKKDYQS). 3 disordered regions span residues 463-673 (NPEI…QSLS), 749-804 (PGKK…STVK), and 827-899 (KASI…KESE). The span at 468–483 (PSRRNESNRKENETPR) shows a compositional bias: basic and acidic residues. The segment at 470 to 573 (RRNESNRKEN…ERTSRKSVRS (104 aa)) is involved in localization to nuclear speckles. Residues 484-556 (RRSHSPSPRH…SRNLLRRSPK (73 aa)) show a composition bias toward basic residues. Serine 554 carries the post-translational modification Phosphoserine. 2 stretches are compositionally biased toward basic and acidic residues: residues 565-583 (RTSRKSVRSDRKKALEDGG) and 591-602 (EVTKQKHTETVD). Residues serine 606 and serine 615 each carry the phosphoserine modification. A compositionally biased stretch (low complexity) spans 618–628 (KPSAKSLSSVK). Serine 637 is subject to Phosphoserine. The 76-residue stretch at 676-751 (SILLVSELPE…KSVKVCVPGK (76 aa)) folds into the RRM 1 domain. The segment covering 755 to 782 (QNKEMKKKPSDIKKSSASALKKETDASK) has biased composition (basic and acidic residues). Lysine 775 is covalently cross-linked (Glycyl lysine isopeptide (Lys-Gly) (interchain with G-Cter in SUMO2)). The span at 783–802 (TMETVSSSSSAKSGQIKSST) shows a compositional bias: low complexity. Basic and acidic residues-rich tracts occupy residues 838 to 854 (KSLEAKKSGNIKNKDSN), 867 to 879 (ASSEDKATGKSAE), and 888 to 899 (ATEKEPVNKESE). The RRM 2 domain maps to 902–976 (SVVFISNLPN…NQLSISMAPE (75 aa)). Over residues 1082 to 1092 (SEVQRKNDLEL) the composition is skewed to basic and acidic residues. Disordered regions lie at residues 1082-1151 (SEVQ…EEPK), 1396-1420 (TVVSSPKAKSTPSKTESHSTFPKPV), 1442-1462 (TRSGLAESNSKSKPTQIGVNR), 1484-1527 (TKQS…KSKE), and 1550-1583 (PSQAKQNPLKGKRKEALKISPSPELNLKKKKGKT). Serine 1099 is modified (phosphoserine). The segment covering 1140–1151 (VHQEELGKEEPK) has biased composition (basic and acidic residues). Over residues 1399–1409 (SSPKAKSTPSK) the composition is skewed to low complexity. Residue serine 1400 is modified to Phosphoserine. Polar residues predominate over residues 1442–1459 (TRSGLAESNSKSKPTQIG). Composition is skewed to basic and acidic residues over residues 1484–1503 (TKQSQETETKPPIMKRDDSN) and 1518–1527 (TTDRSSKSKE). Residues serine 1635 and serine 1661 each carry the phosphoserine modification. Disordered regions lie at residues 1763–1898 (EVGD…SDVP) and 1930–1960 (KSTRHKQNTEKFMAKQRKEKEQNETEERSSR). Positions 1772 to 1790 (NDSKVELARGKIEHHTDKK) are enriched in basic and acidic residues. Lysine 1804 participates in a covalent cross-link: Glycyl lysine isopeptide (Lys-Gly) (interchain with G-Cter in SUMO2). The span at 1806 to 1818 (DSFSQVGPGSETV) shows a compositional bias: polar residues. Over residues 1819 to 1831 (TQKDLKTMPERHL) the composition is skewed to basic and acidic residues. Residue serine 1864 is modified to Phosphoserine. A compositionally biased stretch (basic and acidic residues) spans 1870–1885 (AELKDSEPDEKRRKTQ). The Matrin-type zinc-finger motif lies at 1876–1906 (EPDEKRRKTQDSSVGKSMTSDVPGDLDFLVP). Residues 1886–1895 (DSSVGKSMTS) show a composition bias toward polar residues. A compositionally biased stretch (basic and acidic residues) spans 1936 to 1960 (QNTEKFMAKQRKEKEQNETEERSSR).

In terms of assembly, interacts with FHL2. Interacts with CEBPA, CEBPD and CEBPG. Interacts with MPHOSPH8 and TASOR components of the HUSH complex; leading to recruitment of the HUSH complex. Interacts with SETDB1. Interacts with HDAC1. Interacts with HDAC4.

The protein resides in the nucleus speckle. Functionally, transcription factor that binds to cytidine clusters in double-stranded DNA. Plays a key role in the silencing of unintegrated retroviral DNA: some part of the retroviral DNA formed immediately after infection remains unintegrated in the host genome and is transcriptionally repressed. Mediates transcriptional repression of unintegrated viral DNA by specifically binding to the cytidine clusters of retroviral DNA and mediating the recruitment of chromatin silencers, such as the HUSH complex, SETDB1 and the histone deacetylases HDAC1 and HDAC4. Acts as an early regulator of adipogenesis by acting as a transcription cofactor of CEBPs (CEBPA, CEBPD and/or CEBPG), controlling the expression of PPARG and probably of other proadipogenic genes, such as SREBF1. May also regulate alternative splicing of target genes during adipogenesis. The polypeptide is Zinc finger protein 638 (Mus musculus (Mouse)).